Here is a 1755-residue protein sequence, read N- to C-terminus: Transposon Ty1-PL Gag-Pol polyprotein (1755 aa).

Polar residues-rich tracts occupy residues 1-23 (MESQ…SVTS), 48-60 (TKAN…TPAS), and 127-152 (QSQF…GNTF). Disordered stretches follow at residues 1–93 (MESQ…MMTQ), 126–174 (PQSQ…PPPM), and 352–421 (GSRN…SKST). The span at 153–165 (TDSSSADSDMTST) shows a compositional bias: low complexity. The tract at residues 299-401 (NNGIHINNKV…NSKSKTARAH (103 aa)) is RNA-binding. Residues 402–418 (NVSTSNNSPSTDNDSIS) are compositionally biased toward low complexity. Serine 416 is modified (phosphoserine). The active-site For protease activity; shared with dimeric partner is aspartate 461. Positions 583-640 (NVHTSESTRKYPYPFIHRMLAHANAQTIRYSLKNNTITYFNESDVDWSSAIDYQCPDC) are integrase-type zinc finger-like. Residues 660–835 (NSYEPFQYLH…AGLDISTLLP (176 aa)) enclose the Integrase catalytic domain. Mg(2+)-binding residues include aspartate 671 and aspartate 736. 3 disordered regions span residues 956–1087 (SKAV…ETEK), 1092–1111 (RSPS…NIVP), and 1130–1187 (DLPL…DNET). Low complexity predominate over residues 960–969 (SPTDSTPPST). A compositionally biased stretch (polar residues) spans 1005–1015 (STPQISNIEST). Over residues 1038–1053 (ESSHASKSKDFRHSDS) the composition is skewed to basic and acidic residues. 2 stretches are compositionally biased toward polar residues: residues 1054-1082 (YSEN…QISD) and 1101-1111 (PENNSSHNIVP). Positions 1178–1212 (KKRSLEDNETEIKVSRDTWNTKNMRSLEPPRSKKR) match the Bipartite nuclear localization signal motif. The region spanning 1338-1476 (NNYYITQLDI…DILGLEIKYQ (139 aa)) is the Reverse transcriptase Ty1/copia-type domain. 6 residues coordinate Mg(2+): aspartate 1346, aspartate 1427, aspartate 1428, aspartate 1610, glutamate 1652, and aspartate 1685. The region spanning 1610–1752 (DASYGNQPYY…IKTFKLLTNK (143 aa)) is the RNase H Ty1/copia-type domain.

In terms of assembly, the capsid protein forms a homotrimer, from which the VLPs are assembled. The protease is a homodimer, whose active site consists of two apposed aspartic acid residues. Post-translationally, initially, virus-like particles (VLPs) are composed of the structural unprocessed proteins Gag and Gag-Pol, and also contain the host initiator methionine tRNA (tRNA(i)-Met) which serves as a primer for minus-strand DNA synthesis, and a dimer of genomic Ty RNA. Processing of the polyproteins occurs within the particle and proceeds by an ordered pathway, called maturation. First, the protease (PR) is released by autocatalytic cleavage of the Gag-Pol polyprotein yielding capsid protein p45 and a Pol-p154 precursor protein. This cleavage is a prerequisite for subsequent processing of Pol-p154 at the remaining sites to release the mature structural and catalytic proteins. Maturation takes place prior to the RT reaction and is required to produce transposition-competent VLPs.

It is found in the cytoplasm. The protein localises to the nucleus. The enzyme catalyses DNA(n) + a 2'-deoxyribonucleoside 5'-triphosphate = DNA(n+1) + diphosphate. It catalyses the reaction Endonucleolytic cleavage to 5'-phosphomonoester.. Its function is as follows. Capsid protein (CA) is the structural component of the virus-like particle (VLP), forming the shell that encapsulates the retrotransposons dimeric RNA genome. The particles are assembled from trimer-clustered units and there are holes in the capsid shells that allow for the diffusion of macromolecules. CA also has nucleocapsid-like chaperone activity, promoting primer tRNA(i)-Met annealing to the multipartite primer-binding site (PBS), dimerization of Ty1 RNA and initiation of reverse transcription. Functionally, the aspartyl protease (PR) mediates the proteolytic cleavages of the Gag and Gag-Pol polyproteins after assembly of the VLP. Reverse transcriptase/ribonuclease H (RT) is a multifunctional enzyme that catalyzes the conversion of the retro-elements RNA genome into dsDNA within the VLP. The enzyme displays a DNA polymerase activity that can copy either DNA or RNA templates, and a ribonuclease H (RNase H) activity that cleaves the RNA strand of RNA-DNA heteroduplexes during plus-strand synthesis and hydrolyzes RNA primers. The conversion leads to a linear dsDNA copy of the retrotransposon that includes long terminal repeats (LTRs) at both ends. In terms of biological role, integrase (IN) targets the VLP to the nucleus, where a subparticle preintegration complex (PIC) containing at least integrase and the newly synthesized dsDNA copy of the retrotransposon must transit the nuclear membrane. Once in the nucleus, integrase performs the integration of the dsDNA into the host genome. This chain is Transposon Ty1-PL Gag-Pol polyprotein (TY1B-PL), found in Saccharomyces cerevisiae (strain ATCC 204508 / S288c) (Baker's yeast).